The following is a 1004-amino-acid chain: Protein CHUP1, chloroplastic (1004 aa).

The required for chloroplast localization stretch occupies residues 1-25 (MFVRIGFVVAASIAAVTVKRLNVKP). The interval 22-63 (NVKPSKPSKPSDNGEGGDKEQSVDPDYNLNDKNLQEEEEEEE) is disordered. A coiled-coil region spans residues 123-341 (EMAYNDGELE…KQVEGLQMNR (219 aa)). Residues 269–290 (LEVQVMELKRKNRELQHEKREL) form a leucine-zipper 1 region. Disordered stretches follow at residues 398–482 (GSER…SMNK), 504–536 (FGQV…GEGL), 612–718 (TATG…GNKV), and 736–755 (SKKE…SSAA). Ser399 carries the post-translational modification Phosphoserine. Over residues 409 to 419 (ESNYSQPSSPG) the composition is skewed to polar residues. The span at 427–439 (SMDSSTSRFSSFS) shows a compositional bias: low complexity. 2 stretches are compositionally biased toward polar residues: residues 504–517 (FGQV…TPET) and 612–624 (TATG…SNES). Positions 670-706 (ARPPLPGGGPPPPPPPPGGGPPPPPGGGPPPPPPPPG) are enriched in pro residues. Positions 744–755 (LISSGTGNSSAA) are enriched in polar residues. Residues 802–823 (LLAFVSWLDEELSFLVDERAVL) form a leucine-zipper 2 region. The disordered stretch occupies residues 979–1004 (RSRAKTESGDNNNNNNNNSNEEESVN).

Expressed in cauline leaves, rosette leaves, stems and flowers, but not in roots.

It localises to the plastid. The protein localises to the chloroplast outer membrane. Its function is as follows. Required for the positioning and movement of chloroplasts. Interacts with profilin and actin independent of its polymerization status. Regulates chloroplast localization by anchoring chloroplasts to the plasma membrane and forming a bridge to the actin cytoskeleton. The sequence is that of Protein CHUP1, chloroplastic (CHUP1) from Arabidopsis thaliana (Mouse-ear cress).